The following is a 335-amino-acid chain: Cytochrome c biogenesis protein CcsA (335 aa).

8 helical membrane passes run 15–35, 36–56, 68–88, 97–117, 142–162, 243–263, 278–298, and 304–324; these read FLLLFLTMLIYWAGAAFPNVT, WLPTLGTTGVAIANLCMATLL, LSNLYESLFFLAWGVTAIHLV, LVGVVTTPVAMGITAFAALSL, VMMLSYATLMVGSVLAIAFLV, IIGLGFPLLTIGIIAGAVWAN, WALITWLVFAAYLHARITKGW, and AILAASGFVVVWVCYLGVNLL.

This sequence belongs to the CcmF/CycK/Ccl1/NrfE/CcsA family. In terms of assembly, may interact with ccs1.

The protein resides in the cellular thylakoid membrane. Functionally, required during biogenesis of c-type cytochromes (cytochrome c6 and cytochrome f) at the step of heme attachment. This chain is Cytochrome c biogenesis protein CcsA, found in Crocosphaera subtropica (strain ATCC 51142 / BH68) (Cyanothece sp. (strain ATCC 51142)).